We begin with the raw amino-acid sequence, 156 residues long: Small ribosomal subunit protein uS7 (156 aa).

Belongs to the universal ribosomal protein uS7 family. In terms of assembly, part of the 30S ribosomal subunit. Contacts proteins S9 and S11.

Functionally, one of the primary rRNA binding proteins, it binds directly to 16S rRNA where it nucleates assembly of the head domain of the 30S subunit. Is located at the subunit interface close to the decoding center, probably blocks exit of the E-site tRNA. This Chlorobaculum tepidum (strain ATCC 49652 / DSM 12025 / NBRC 103806 / TLS) (Chlorobium tepidum) protein is Small ribosomal subunit protein uS7.